A 348-amino-acid chain; its full sequence is D-alanine--D-alanine ligase (348 aa).

The 203-residue stretch at 132 to 334 folds into the ATP-grasp domain; the sequence is KQVLATVGVP…YSDLIEKLVM (203 aa). 162–217 provides a ligand contact to ATP; the sequence is LETLSFPIFVKPANMGSSVGISKATDESSLRSAIDLALKYDSRILIEQGVTAREIE. Residues Asp288, Glu301, and Asn303 each contribute to the Mg(2+) site.

Belongs to the D-alanine--D-alanine ligase family. Requires Mg(2+) as cofactor. The cofactor is Mn(2+).

Its subcellular location is the cytoplasm. The catalysed reaction is 2 D-alanine + ATP = D-alanyl-D-alanine + ADP + phosphate + H(+). It participates in cell wall biogenesis; peptidoglycan biosynthesis. In terms of biological role, cell wall formation. In Streptococcus agalactiae serotype Ia (strain ATCC 27591 / A909 / CDC SS700), this protein is D-alanine--D-alanine ligase.